We begin with the raw amino-acid sequence, 325 residues long: Glucosyl-3-phosphoglycerate synthase (325 aa).

UDP-alpha-D-glucose contacts are provided by residues 37–41 (PSLNE), Ser71, Lys104, and 124–125 (DS). Asp126 lines the Mn(2+) pocket. 171–174 (GRVT) lines the (2R)-3-phosphoglycerate pocket. UDP-alpha-D-glucose-binding positions include 216–219 (YGVE) and 243–248 (RIHDNQ). His245 contacts Mn(2+). Asn247 is a binding site for (2R)-3-phosphoglycerate.

The protein belongs to the glycosyltransferase 2 family. In terms of assembly, homodimer in solution. Requires Co(2+) as cofactor. Mg(2+) is required as a cofactor. It depends on Mn(2+) as a cofactor. Ni(2+) serves as cofactor. The cofactor is Zn(2+).

The catalysed reaction is an NDP-alpha-D-glucose + (2R)-3-phosphoglycerate = (2R)-2-O-(alpha-D-glucopyranosyl)-3-phospho-glycerate + a ribonucleoside 5'-diphosphate + H(+). The enzyme catalyses (2R)-3-phosphoglycerate + UDP-alpha-D-glucose = (2R)-2-O-(alpha-D-glucopyranosyl)-3-phospho-glycerate + UDP + H(+). It catalyses the reaction ADP-alpha-D-glucose + (2R)-3-phosphoglycerate = (2R)-2-O-(alpha-D-glucopyranosyl)-3-phospho-glycerate + ADP + H(+). Its activity is regulated as follows. Inhibited by ADP and EDTA. In terms of biological role, involved in the biosynthesis of the compatible solute mannosylglucosylglycerate through a phosphorylating pathway. Catalyzes the transfer of the glucose moiety from a nuleotide sugar such as UDP-alpha-D-glucose to the position 2 of 3-phospho-D-glycerate (3-PGA) to form glucosyl-3-phosphoglycerate (GPG). UDP-glucose is the preferred substrate, but it can be partially replaced by ADP-glucose. This Petrotoga mobilis (strain DSM 10674 / SJ95) protein is Glucosyl-3-phosphoglycerate synthase.